The following is a 440-amino-acid chain: Ribulose bisphosphate carboxylase large chain (440 aa).

Lys-4 carries the post-translational modification N6,N6,N6-trimethyllysine. Substrate-binding residues include Asn-113 and Thr-163. The active-site Proton acceptor is the Lys-165. Lys-167 contacts substrate. Lys-191, Asp-193, and Glu-194 together coordinate Mg(2+). Lys-191 is modified (N6-carboxylysine). The active-site Proton acceptor is the His-284. Substrate contacts are provided by Arg-285, His-317, and Ser-369.

Belongs to the RuBisCO large chain family. Type I subfamily. In terms of assembly, heterohexadecamer of 8 large chains and 8 small chains; disulfide-linked. The disulfide link is formed within the large subunit homodimers. It depends on Mg(2+) as a cofactor. Post-translationally, the disulfide bond which can form in the large chain dimeric partners within the hexadecamer appears to be associated with oxidative stress and protein turnover.

The protein resides in the plastid. It is found in the chloroplast. The enzyme catalyses 2 (2R)-3-phosphoglycerate + 2 H(+) = D-ribulose 1,5-bisphosphate + CO2 + H2O. It carries out the reaction D-ribulose 1,5-bisphosphate + O2 = 2-phosphoglycolate + (2R)-3-phosphoglycerate + 2 H(+). Functionally, ruBisCO catalyzes two reactions: the carboxylation of D-ribulose 1,5-bisphosphate, the primary event in carbon dioxide fixation, as well as the oxidative fragmentation of the pentose substrate in the photorespiration process. Both reactions occur simultaneously and in competition at the same active site. The polypeptide is Ribulose bisphosphate carboxylase large chain (Polystichum munitum (Western sword-fern)).